The primary structure comprises 301 residues: tRNA (guanine-N(7)-)-methyltransferase (301 aa).

A disordered region spans residues 1–26 (MSETPDSPRPVTPGSQASFGTYGGRP). S-adenosyl-L-methionine contacts are provided by Glu85, Glu110, Asn137, and Asp160. Asp160 is an active-site residue. Substrate-binding residues include Lys164 and Asp196. A disordered region spans residues 244-270 (APVREGRAPVSTEHTGPNEGVDEEGGW). 280–283 (TSFE) contacts substrate.

This sequence belongs to the class I-like SAM-binding methyltransferase superfamily. TrmB family.

The catalysed reaction is guanosine(46) in tRNA + S-adenosyl-L-methionine = N(7)-methylguanosine(46) in tRNA + S-adenosyl-L-homocysteine. The protein operates within tRNA modification; N(7)-methylguanine-tRNA biosynthesis. Catalyzes the formation of N(7)-methylguanine at position 46 (m7G46) in tRNA. This chain is tRNA (guanine-N(7)-)-methyltransferase, found in Paenarthrobacter aurescens (strain TC1).